The chain runs to 140 residues: Lymphocyte antigen 6H (140 aa).

An N-terminal signal peptide occupies residues 1 to 25 (MLPAAMKGLGLALLAVLLCSAPAHG). One can recognise a UPAR/Ly6 domain in the interval 26–91 (LWCQDCTLTT…RHFFSDYLMG (66 aa)). Intrachain disulfides connect Cys28–Cys52, Cys31–Cys40, Cys45–Cys73, Cys77–Cys104, and Cys105–Cys110. N-linked (GlcNAc...) asparagine glycosylation is present at Asn36. Gly115 carries the GPI-anchor amidated glycine lipid modification. The propeptide at 116 to 140 (AGHSPWALAGGLLLSLGPALLWAGP) is removed in mature form.

In terms of assembly, interacts with CHRNA4 and CHRNA7. In terms of tissue distribution, highly expressed in brain (cerebral cortex, amygdala, hippocampus and subthalamic nucleus) and in acute human leukemic cell line MOLT-3. Also found in lower levels in testis, pancreas, small intestine and colon.

The protein localises to the cell membrane. In terms of biological role, believed to act as a modulator of nicotinic acetylcholine receptors (nAChRs) activity. In vitro inhibits alpha-3:beta-4-containing nAChRs maximum response. May play a role in the intracellular trafficking of alpha-7-containing nAChRs and may inhibit their expression at the cell surface. Seems to inhibit alpha-7/CHRNA7 signaling in hippocampal neurons. The chain is Lymphocyte antigen 6H (LY6H) from Homo sapiens (Human).